A 539-amino-acid polypeptide reads, in one-letter code: Propionyl-CoA carboxylase beta chain, mitochondrial (539 aa).

Residues 1 to 28 (MAAAVRVTAARARLRVVVRSLHAGVRSL) constitute a mitochondrion transit peptide. In terms of domain architecture, CoA carboxyltransferase N-terminal spans 32 to 290 (PVSVNERIEN…SNQDPAPIRE (259 aa)). The interval 32–533 (PVSVNERIEN…SKKVQRPWRK (502 aa)) is carboxyltransferase. Ser71 is modified (phosphoserine). The residue at position 99 (Lys99) is an N6-acetyllysine; alternate. N6-succinyllysine; alternate is present on Lys99. The region spanning 294–533 (PSDRLVPELD…SKKVQRPWRK (240 aa)) is the CoA carboxyltransferase C-terminal domain. An acyl-CoA binding region spans residues 325 to 358 (DERDFFEIMPNYAKNIIVGFARMNGRTVGIVGNQ). 2 positions are modified to N6-acetyllysine; alternate: Lys474 and Lys489. An N6-succinyllysine; alternate mark is found at Lys474 and Lys489.

This sequence belongs to the AccD/PCCB family. The holoenzyme is a dodecamer composed of 6 PCCA/alpha subunits and 6 PCCB/beta subunits.

Its subcellular location is the mitochondrion matrix. The enzyme catalyses propanoyl-CoA + hydrogencarbonate + ATP = (S)-methylmalonyl-CoA + ADP + phosphate + H(+). It catalyses the reaction butanoyl-CoA + hydrogencarbonate + ATP = (2S)-ethylmalonyl-CoA + ADP + phosphate + H(+). The protein operates within metabolic intermediate metabolism; propanoyl-CoA degradation; succinyl-CoA from propanoyl-CoA: step 1/3. This is one of the 2 subunits of the biotin-dependent propionyl-CoA carboxylase (PCC), a mitochondrial enzyme involved in the catabolism of odd chain fatty acids, branched-chain amino acids isoleucine, threonine, methionine, and valine and other metabolites. Propionyl-CoA carboxylase catalyzes the carboxylation of propionyl-CoA/propanoyl-CoA to D-methylmalonyl-CoA/(S)-methylmalonyl-CoA. Within the holoenzyme, the alpha subunit catalyzes the ATP-dependent carboxylation of the biotin carried by the biotin carboxyl carrier (BCC) domain, while the beta subunit then transfers the carboxyl group from carboxylated biotin to propionyl-CoA. Propionyl-CoA carboxylase also significantly acts on butyryl-CoA/butanoyl-CoA, which is converted to ethylmalonyl-CoA/(2S)-ethylmalonyl-CoA at a much lower rate. Other alternative minor substrates include (2E)-butenoyl-CoA/crotonoyl-CoA. In Sus scrofa (Pig), this protein is Propionyl-CoA carboxylase beta chain, mitochondrial.